A 293-amino-acid polypeptide reads, in one-letter code: Haloalkane dehalogenase (293 aa).

An AB hydrolase-1 domain is found at 34-158; the sequence is PVLFLHGNPT…FQAFRTADVG (125 aa). D106 serves as the catalytic Nucleophile. Catalysis depends on E130, which acts as the Proton donor. Residue H272 is the Proton acceptor of the active site.

The protein belongs to the haloalkane dehalogenase family. Type 2 subfamily. Monomer.

It carries out the reaction 1-haloalkane + H2O = a halide anion + a primary alcohol + H(+). It functions in the pathway xenobiotic degradation; haloalkane degradation. It participates in xenobiotic degradation; 1,3-dichloropropene degradation. In terms of biological role, catalyzes hydrolytic cleavage of carbon-halogen bonds in halogenated aliphatic compounds, leading to the formation of the corresponding primary alcohols, halide ions and protons. Has a broad substrate specificity, as it is able to dehalogenate mono- and di- chlorinated and brominated alkanes (up to at least C10), and the two isomers of 1,3-dichloropropene to 3-chloroallyl alcohol; the highest activity was found with 1,2-dibromoethane, while no activity was observed with the analog 1,2-dichloroethane. The sequence is that of Haloalkane dehalogenase (dhaA) from Pseudomonas pavonaceae.